The primary structure comprises 359 residues: Tropomodulin-1 (359 aa).

The segment at 36-61 (ELDPDNALLPAGLRQKDQTTKAPTGP) is disordered. Residues 39–138 (PDNALLPAGL…CDIAAILGMH (100 aa)) are tropomyosin-binding.

Belongs to the tropomodulin family. Binds to the N-terminus of tropomyosin and to actin. Interacts with FLII. Highly expressed in the erythrocyte, heart and skeletal muscle.

It localises to the cytoplasm. The protein localises to the cytoskeleton. Functionally, blocks the elongation and depolymerization of the actin filaments at the pointed end. The Tmod/TM complex contributes to the formation of the short actin protofilament, which in turn defines the geometry of the membrane skeleton. May play an important role in regulating the organization of actin filaments by preferentially binding to a specific tropomyosin isoform at its N-terminus. The chain is Tropomodulin-1 (TMOD1) from Homo sapiens (Human).